Consider the following 111-residue polypeptide: Cytochrome c (111 aa).

Position 1 is an N-acetylalanine (A1). Heme c contacts are provided by C22, C25, and H26. K80 is modified (N6,N6,N6-trimethyllysine). M88 contributes to the heme c binding site. N6,N6,N6-trimethyllysine is present on K94.

Belongs to the cytochrome c family. Post-translationally, binds 1 heme c group covalently per subunit.

The protein localises to the mitochondrion intermembrane space. Electron carrier protein. The oxidized form of the cytochrome c heme group can accept an electron from the heme group of the cytochrome c1 subunit of cytochrome reductase. Cytochrome c then transfers this electron to the cytochrome oxidase complex, the final protein carrier in the mitochondrial electron-transport chain. The chain is Cytochrome c from Gossypium barbadense (Sea Island cotton).